Reading from the N-terminus, the 188-residue chain is Pyridoxal 5'-phosphate synthase subunit PdxT (188 aa).

Position 47-49 (47-49 (GES)) interacts with L-glutamine. Residue Cys-79 is the Nucleophile of the active site. Residues Arg-105 and 134-135 (IR) each bind L-glutamine. Catalysis depends on charge relay system residues His-170 and Glu-172.

The protein belongs to the glutaminase PdxT/SNO family. In the presence of PdxS, forms a dodecamer of heterodimers. Only shows activity in the heterodimer.

The catalysed reaction is aldehydo-D-ribose 5-phosphate + D-glyceraldehyde 3-phosphate + L-glutamine = pyridoxal 5'-phosphate + L-glutamate + phosphate + 3 H2O + H(+). It carries out the reaction L-glutamine + H2O = L-glutamate + NH4(+). Its pathway is cofactor biosynthesis; pyridoxal 5'-phosphate biosynthesis. Functionally, catalyzes the hydrolysis of glutamine to glutamate and ammonia as part of the biosynthesis of pyridoxal 5'-phosphate. The resulting ammonia molecule is channeled to the active site of PdxS. The polypeptide is Pyridoxal 5'-phosphate synthase subunit PdxT (Listeria monocytogenes serotype 4a (strain HCC23)).